A 231-amino-acid polypeptide reads, in one-letter code: WAP four-disulfide core domain protein 3 (231 aa).

Residues 1–24 (MMLSCLFLLKALLALGSLESWITA) form the signal peptide. 4 WAP domains span residues 26-68 (EHAK…CRDI), 69-114 (PKGR…VVPI), 119-162 (LAEF…LGDI), and 163-207 (EGGR…VPPV). Cystine bridges form between cysteine 33–cysteine 57, cysteine 40–cysteine 61, cysteine 44–cysteine 56, cysteine 50–cysteine 65, cysteine 76–cysteine 102, cysteine 85–cysteine 106, cysteine 89–cysteine 101, cysteine 95–cysteine 110, cysteine 126–cysteine 150, cysteine 133–cysteine 154, cysteine 137–cysteine 149, cysteine 143–cysteine 158, cysteine 170–cysteine 195, cysteine 178–cysteine 199, cysteine 182–cysteine 194, and cysteine 188–cysteine 203. N-linked (GlcNAc...) asparagine glycosylation occurs at asparagine 107. Residue asparagine 217 is glycosylated (N-linked (GlcNAc...) asparagine).

As to expression, ubiquitously expressed.

It localises to the secreted. This chain is WAP four-disulfide core domain protein 3 (WFDC3), found in Homo sapiens (Human).